The chain runs to 168 residues: ATP synthase subunit b (168 aa).

A helical transmembrane segment spans residues 11–31 (NTVLGNIIVVSGAFIILLVLL).

It belongs to the ATPase B chain family. In terms of assembly, F-type ATPases have 2 components, F(1) - the catalytic core - and F(0) - the membrane proton channel. F(1) has five subunits: alpha(3), beta(3), gamma(1), delta(1), epsilon(1). F(0) has three main subunits: a(1), b(2) and c(10-14). The alpha and beta chains form an alternating ring which encloses part of the gamma chain. F(1) is attached to F(0) by a central stalk formed by the gamma and epsilon chains, while a peripheral stalk is formed by the delta and b chains.

The protein localises to the cell membrane. In terms of biological role, f(1)F(0) ATP synthase produces ATP from ADP in the presence of a proton or sodium gradient. F-type ATPases consist of two structural domains, F(1) containing the extramembraneous catalytic core and F(0) containing the membrane proton channel, linked together by a central stalk and a peripheral stalk. During catalysis, ATP synthesis in the catalytic domain of F(1) is coupled via a rotary mechanism of the central stalk subunits to proton translocation. Its function is as follows. Component of the F(0) channel, it forms part of the peripheral stalk, linking F(1) to F(0). The chain is ATP synthase subunit b from Lactococcus lactis subsp. lactis (strain IL1403) (Streptococcus lactis).